The primary structure comprises 228 residues: Ribulose-phosphate 3-epimerase (228 aa).

Ser-11 lines the substrate pocket. Residues His-36, Asp-38, and His-69 each coordinate a divalent metal cation. Asp-38 serves as the catalytic Proton acceptor. Substrate-binding positions include His-69, 145–148 (GFCG), 180–182 (DGG), and 202–203 (AS). Asp-180 contributes to the a divalent metal cation binding site. Asp-180 acts as the Proton donor in catalysis.

This sequence belongs to the ribulose-phosphate 3-epimerase family. It depends on a divalent metal cation as a cofactor.

It carries out the reaction D-ribulose 5-phosphate = D-xylulose 5-phosphate. It functions in the pathway carbohydrate degradation. In terms of biological role, catalyzes the reversible epimerization of D-ribulose 5-phosphate to D-xylulose 5-phosphate. This Chlamydia muridarum (strain MoPn / Nigg) protein is Ribulose-phosphate 3-epimerase.